Consider the following 538-residue polypeptide: DALR anticodon-binding domain-containing protein 3 (538 aa).

In terms of assembly, part of a complex containing tRNA(Arg) and METTL2. Interacts with tRNA(Arg)(CCU) and tRNA(Arg)(UCU). Interacts with METTL2.

In terms of biological role, involved in tRNA methylation. Facilitates the recognition and targeting of tRNA(Arg)(CCU) and tRNA(Arg)(UCU) substrates for N(3)-methylcytidine modification by METTL2. In Rattus norvegicus (Rat), this protein is DALR anticodon-binding domain-containing protein 3 (Dalrd3).